A 342-amino-acid polypeptide reads, in one-letter code: Biotin synthase (342 aa).

A Radical SAM core domain is found at 38–262 (GQVQISTLLS…MMPTSYVRLS (225 aa)). C53, C57, and C60 together coordinate [4Fe-4S] cluster. 4 residues coordinate [2Fe-2S] cluster: C97, C128, C188, and R260.

It belongs to the radical SAM superfamily. Biotin synthase family. Homodimer. [4Fe-4S] cluster is required as a cofactor. The cofactor is [2Fe-2S] cluster.

It carries out the reaction (4R,5S)-dethiobiotin + (sulfur carrier)-SH + 2 reduced [2Fe-2S]-[ferredoxin] + 2 S-adenosyl-L-methionine = (sulfur carrier)-H + biotin + 2 5'-deoxyadenosine + 2 L-methionine + 2 oxidized [2Fe-2S]-[ferredoxin]. The protein operates within cofactor biosynthesis; biotin biosynthesis; biotin from 7,8-diaminononanoate: step 2/2. Catalyzes the conversion of dethiobiotin (DTB) to biotin by the insertion of a sulfur atom into dethiobiotin via a radical-based mechanism. This Baumannia cicadellinicola subsp. Homalodisca coagulata protein is Biotin synthase.